Consider the following 331-residue polypeptide: Phosphoribosylformylglycinamidine cyclo-ligase (331 aa).

Belongs to the AIR synthase family.

It localises to the cytoplasm. It catalyses the reaction 2-formamido-N(1)-(5-O-phospho-beta-D-ribosyl)acetamidine + ATP = 5-amino-1-(5-phospho-beta-D-ribosyl)imidazole + ADP + phosphate + H(+). It functions in the pathway purine metabolism; IMP biosynthesis via de novo pathway; 5-amino-1-(5-phospho-D-ribosyl)imidazole from N(2)-formyl-N(1)-(5-phospho-D-ribosyl)glycinamide: step 2/2. This is Phosphoribosylformylglycinamidine cyclo-ligase from Clostridium novyi (strain NT).